Consider the following 157-residue polypeptide: Protein Smg homolog (157 aa).

This sequence belongs to the Smg family.

This chain is Protein Smg homolog, found in Colwellia psychrerythraea (strain 34H / ATCC BAA-681) (Vibrio psychroerythus).